The chain runs to 1260 residues: Agglutinin-like protein 1 (1260 aa).

Positions 1–17 (MLQQFTLLFLYLSIASA) are cleaved as a signal peptide. 4 cysteine pairs are disulfide-bonded: Cys73–Cys150, Cys96–Cys112, Cys205–Cys298, and Cys227–Cys256. A run of 10 repeats spans residues 433 to 468 (SPNP…IIRE), 469 to 504 (PPNH…IIRE), 505 to 540 (PPNP…IIRE), 541 to 576 (PPNP…IIRE), 577 to 612 (PPNH…IIRE), 613 to 648 (PPNH…IIRE), 649 to 684 (PPNP…LIRE), 685 to 720 (PPNH…LIRE), 721 to 756 (PPNH…IIRE), and 757 to 792 (PPNP…IIYE). The 10 X 36 AA tandem repeats stretch occupies residues 433–792 (SPNPTVSTTE…GGTDTVIIYE (360 aa)). Asn471 is a glycosylation site (N-linked (GlcNAc...) asparagine). Residues Asn579 and Asn615 are each glycosylated (N-linked (GlcNAc...) asparagine). 2 N-linked (GlcNAc...) asparagine glycosylation sites follow: Asn687 and Asn723. Asn820, Asn886, Asn918, and Asn973 each carry an N-linked (GlcNAc...) asparagine glycan. Polar residues-rich tracts occupy residues 896–918 (PTAS…SSDN) and 964–979 (KVTF…GTHD). Disordered stretches follow at residues 896 to 924 (PTAS…KSGV) and 954 to 1226 (SIPS…SSSP). The segment covering 980–995 (SQSTSTEIEIVTTSST) has biased composition (low complexity). Residues 983–1043 (TSTEIEIVTT…TTSQPTGDNG (61 aa)) form a 2-1 repeat. The 2 X 26 AA approximate repeats stretch occupies residues 983–1152 (TSTEIEIVTT…ATTQATNENG (170 aa)). Residues 1002 to 1062 (VSSNTDLTSE…PTVATSTLAS (61 aa)) are compositionally biased toward polar residues. 2 N-linked (GlcNAc...) asparagine glycosylation sites follow: Asn1045 and Asn1068. The span at 1073-1090 (HESASTSLKPSMGENSGL) shows a compositional bias: polar residues. Positions 1091-1110 (TTSTEIEATTTSPTEAPSPA) are enriched in low complexity. The stretch at 1092–1152 (TSTEIEATTT…ATTQATNENG (61 aa)) is one 2-2 repeat. Polar residues predominate over residues 1111–1154 (VSSGTDVTTEPTDTREQPTTLSTTSKTNSESVATTQATNENGGK). Low complexity-rich tracts occupy residues 1155–1176 (SPST…SANS) and 1197–1226 (SHST…SSSP).

Belongs to the ALS family. Post-translationally, N-glycosylated and O-glycosylated. In terms of processing, the GPI-anchor is attached to the protein in the endoplasmic reticulum and serves to target the protein to the cell surface. There, the glucosamine-inositol phospholipid moiety is cleaved off and the GPI-modified mannoprotein is covalently attached via its lipidless GPI glycan remnant to the 1,6-beta-glucan of the outer cell wall layer.

It is found in the cell membrane. The protein localises to the secreted. Its subcellular location is the cell wall. Functionally, major cell surface adhesion protein which mediates both yeast-to-host tissue adherence and yeast aggregation. Acts as a downstream effector of the EFG1 regulatory pathway. Required for rapamycin-induced aggregation of C.albicans. Binds glycans and mediates adherence to endothelial and epithelial cells, thereby playing an important role in the pathogenesis of C.albicans infections. The protein is Agglutinin-like protein 1 (ALS1) of Candida albicans (Yeast).